Consider the following 211-residue polypeptide: Uracil phosphoribosyltransferase (211 aa).

5-phospho-alpha-D-ribose 1-diphosphate contacts are provided by residues Arg81, Arg106, and 133–141; that span reads DPMLATGNS. Uracil is bound by residues Ile196 and 201–203; that span reads GDA. 5-phospho-alpha-D-ribose 1-diphosphate is bound at residue Asp202.

This sequence belongs to the UPRTase family. Requires Mg(2+) as cofactor.

The enzyme catalyses UMP + diphosphate = 5-phospho-alpha-D-ribose 1-diphosphate + uracil. It participates in pyrimidine metabolism; UMP biosynthesis via salvage pathway; UMP from uracil: step 1/1. With respect to regulation, allosterically activated by GTP. Functionally, catalyzes the conversion of uracil and 5-phospho-alpha-D-ribose 1-diphosphate (PRPP) to UMP and diphosphate. In Paracoccus denitrificans (strain Pd 1222), this protein is Uracil phosphoribosyltransferase.